We begin with the raw amino-acid sequence, 547 residues long: Delta-guaiene synthase 3 (547 aa).

Mg(2+) is bound by residues aspartate 299, aspartate 303, and aspartate 444. Positions 299-303 (DDTYD) match the DDXXD motif motif.

Belongs to the terpene synthase family. Requires Mg(2+) as cofactor.

It catalyses the reaction (2E,6E)-farnesyl diphosphate = delta-guaiene + diphosphate. The enzyme catalyses (2E,6E)-farnesyl diphosphate = alpha-guaiene + diphosphate. The protein operates within secondary metabolite biosynthesis; terpenoid biosynthesis. Functionally, sesquiterpene synthase involved in the biosynthesis of delta-guaiene (78.2%) and alpha-guaiene (20.9%), two structures composed of five- and seven-membered rings. Also produces 0.9% of alpha-humulene. The protein is Delta-guaiene synthase 3 (C4) of Aquilaria crassna (Eagle wood).